Here is a 356-residue protein sequence, read N- to C-terminus: Formate-nitrite transporter (356 aa).

Residues 1–108 (MPREKPRADE…TKATYPIMKM (108 aa)) are Cytoplasmic-facing. Residues 109–129 (FSLSVLAGMLLSVGGLLSITI) form a helical membrane-spanning segment. The Extracellular segment spans residues 130 to 142 (GKGIPSSDIGIQK). The chain crosses the membrane as a helical span at residues 143–163 (IVFGFFNSVGLNLVVLCGGEL). Over 164–182 (FTSNCAFLIPGFMEGAYSR) the chain is Cytoplasmic. A helical transmembrane segment spans residues 183–203 (WLFFKTHFVVYFGNLVGSIFV). Topologically, residues 204–237 (STYFGKLLGSFESPMYLSAVKQIGETKVAMNWGR) are extracellular. A helical membrane pass occupies residues 238–258 (ALLSGIGCNWLVCCAVYFSAS). The Cytoplasmic portion of the chain corresponds to 259 to 265 (AKDLLSK). The chain crosses the membrane as a helical span at residues 266 to 286 (LVVISFLVLTFASLEFENCVG). Topologically, residues 287–310 (NMFLLSLSHMYGGNFTLGQWILNN) are extracellular. The helical transmembrane segment at 311-331 (LIPVSIGNFIGGTFLLGIPLW) threads the bilayer. The Cytoplasmic segment spans residues 332–356 (YVHVSNVYNIPFLDPLYQQSQAKTQ).

This sequence belongs to the FNT transporter (TC 1.A.16) family. As to quaternary structure, homopentamer.

Its subcellular location is the membrane. It carries out the reaction (S)-lactate(in) + H(+)(in) = (S)-lactate(out) + H(+)(out). The catalysed reaction is formate(in) + H(+)(in) = formate(out) + H(+)(out). It catalyses the reaction pyruvate(out) + H(+)(out) = pyruvate(in) + H(+)(in). The enzyme catalyses acetate(out) + H(+)(out) = acetate(in) + H(+)(in). Monocarboxylate-proton symporter; active in acidic-to-neutral pH range. Transports formate, acetate and L-lactate. This Entamoeba histolytica (strain ATCC 30459 / HM-1:IMSS / ABRM) protein is Formate-nitrite transporter.